We begin with the raw amino-acid sequence, 284 residues long: Ubiquitin thioesterase otubain-like (284 aa).

Residues 77–274 (GEIRYIRGDG…PGHYDVIYKK (198 aa)) form the OTU domain. The active site involves Asp-85. Catalysis depends on Cys-88, which acts as the Nucleophile. Ile-176 is a substrate binding site. Active-site residues include His-245 and His-267.

It belongs to the peptidase C65 family.

The enzyme catalyses Thiol-dependent hydrolysis of ester, thioester, amide, peptide and isopeptide bonds formed by the C-terminal Gly of ubiquitin (a 76-residue protein attached to proteins as an intracellular targeting signal).. Functionally, hydrolase that can remove conjugated ubiquitin from proteins and plays an important regulatory role at the level of protein turnover by preventing degradation. Specifically cleaves 'Lys-48'-linked polyubiquitin. The chain is Ubiquitin thioesterase otubain-like (otub-1) from Caenorhabditis elegans.